A 440-amino-acid chain; its full sequence is Polyprenol-phosphate-mannose-dependent alpha-(1-2)-phosphatidylinositol mannoside mannosyltransferase (440 aa).

A run of 11 helical transmembrane segments spans residues 15 to 35 (LAPTIAWRVFQLLTLAGVLWV), 87 to 107 (LAAIAFAPFAWLSLPLASSAI), 109 to 129 (ATTLVLLIVATTIVLTRLDVW), 144 to 161 (AWLAAAMVAPAVIYLEPI), 164 to 184 (NFEFGQINVVLMTLVIADCVP), 193 to 213 (LLLGLAIALKLTPAVFLLYFL), 224 to 244 (TAATAVVASLAGFALAWSDSV), 281 to 301 (PRFILWVLACFAVLALTVWAA), 316 to 336 (APVLALVCVALFGLVVSPVSW), 360 to 380 (VWFTALTAAGLALTVWTPITL), and 395 to 415 (LAGGSYVWWAFAVIVVIGLVS). Residues 419 to 440 (THTGDAHETDEPLVPLARGEAG) are disordered.

This sequence belongs to the glycosyltransferase 87 family.

The protein resides in the cell membrane. It functions in the pathway phospholipid metabolism; phosphatidylinositol metabolism. Functionally, responsible for the addition of alpha-(1-2) mannose branches to the linear mannan core on the biosynthetic pathway to mature Lipoarabinomannan (LAM). This chain is Polyprenol-phosphate-mannose-dependent alpha-(1-2)-phosphatidylinositol mannoside mannosyltransferase, found in Mycolicibacterium smegmatis (strain ATCC 700084 / mc(2)155) (Mycobacterium smegmatis).